The chain runs to 251 residues: Triosephosphate isomerase 1 (251 aa).

Asn-9–Lys-11 is a binding site for substrate. His-95 (electrophile) is an active-site residue. The active-site Proton acceptor is the Glu-167. Substrate-binding positions include Gly-173, Ser-213, and Gly-234–Gly-235.

It belongs to the triosephosphate isomerase family. As to quaternary structure, homodimer.

The protein resides in the cytoplasm. It catalyses the reaction D-glyceraldehyde 3-phosphate = dihydroxyacetone phosphate. Its pathway is carbohydrate biosynthesis; gluconeogenesis. It participates in carbohydrate degradation; glycolysis; D-glyceraldehyde 3-phosphate from glycerone phosphate: step 1/1. Involved in the gluconeogenesis. Catalyzes stereospecifically the conversion of dihydroxyacetone phosphate (DHAP) to D-glyceraldehyde-3-phosphate (G3P). This is Triosephosphate isomerase 1 from Listeria innocua serovar 6a (strain ATCC BAA-680 / CLIP 11262).